Here is a 99-residue protein sequence, read N- to C-terminus: Large ribosomal subunit protein eL30 (99 aa).

The protein belongs to the eukaryotic ribosomal protein eL30 family.

The sequence is that of Large ribosomal subunit protein eL30 from Methanosarcina acetivorans (strain ATCC 35395 / DSM 2834 / JCM 12185 / C2A).